The following is a 163-amino-acid chain: Nucleotide-binding protein Mvan_0997 (163 aa).

This sequence belongs to the YajQ family.

In terms of biological role, nucleotide-binding protein. The sequence is that of Nucleotide-binding protein Mvan_0997 from Mycolicibacterium vanbaalenii (strain DSM 7251 / JCM 13017 / BCRC 16820 / KCTC 9966 / NRRL B-24157 / PYR-1) (Mycobacterium vanbaalenii).